Here is a 185-residue protein sequence, read N- to C-terminus: AP-3 complex subunit sigma (185 aa).

This sequence belongs to the adaptor complexes small subunit family. As to quaternary structure, adaptor protein complex 3 (AP-3) is a heterotetramer composed of 2 large adaptins (APL5 and APL6), a medium adaptin (APM3) and a small adaptin (APS3).

It localises to the golgi apparatus. The protein resides in the cytoplasmic vesicle membrane. Part of the AP-3 complex, an adaptor-related complex which is not clathrin-associated. The complex is associated with the Golgi region as well as more peripheral structures. It facilitates the budding of vesicles from the Golgi membrane and may be directly involved in trafficking to the vacuole. This is AP-3 complex subunit sigma (APS3) from Eremothecium gossypii (strain ATCC 10895 / CBS 109.51 / FGSC 9923 / NRRL Y-1056) (Yeast).